The chain runs to 250 residues: Uridylate kinase (250 aa).

17–20 provides a ligand contact to ATP; that stretch reads KLSG. Glycine 59 lines the UMP pocket. ATP-binding residues include glycine 60 and arginine 64. Residues aspartate 79 and 140 to 147 each bind UMP; that span reads TGNPYFTT. ATP contacts are provided by threonine 167, tyrosine 173, and aspartate 176.

This sequence belongs to the UMP kinase family. In terms of assembly, homohexamer.

The protein localises to the cytoplasm. The enzyme catalyses UMP + ATP = UDP + ADP. It functions in the pathway pyrimidine metabolism; CTP biosynthesis via de novo pathway; UDP from UMP (UMPK route): step 1/1. Inhibited by UTP. Functionally, catalyzes the reversible phosphorylation of UMP to UDP. The protein is Uridylate kinase of Myxococcus xanthus (strain DK1622).